A 423-amino-acid chain; its full sequence is Glutamate-1-semialdehyde 2,1-aminomutase (423 aa).

K259 is subject to N6-(pyridoxal phosphate)lysine.

Belongs to the class-III pyridoxal-phosphate-dependent aminotransferase family. HemL subfamily. Pyridoxal 5'-phosphate is required as a cofactor.

The protein resides in the cytoplasm. It catalyses the reaction (S)-4-amino-5-oxopentanoate = 5-aminolevulinate. It functions in the pathway porphyrin-containing compound metabolism; protoporphyrin-IX biosynthesis; 5-aminolevulinate from L-glutamyl-tRNA(Glu): step 2/2. This is Glutamate-1-semialdehyde 2,1-aminomutase from Methanobrevibacter smithii (strain ATCC 35061 / DSM 861 / OCM 144 / PS).